The following is a 277-amino-acid chain: Acetyl-coenzyme A carboxylase carboxyl transferase subunit beta (277 aa).

Positions 22 to 277 constitute a CoA carboxyltransferase N-terminal domain; it reads LWTKCPGCNR…TLKQLLYFLT (256 aa). Cys26, Cys29, Cys45, and Cys48 together coordinate Zn(2+). A C4-type zinc finger spans residues 26–48; it reads CPGCNRFLYTKELELNQSVCHYC.

The protein belongs to the AccD/PCCB family. In terms of assembly, acetyl-CoA carboxylase is a heterohexamer composed of biotin carboxyl carrier protein (AccB), biotin carboxylase (AccC) and two subunits each of ACCase subunit alpha (AccA) and ACCase subunit beta (AccD). Zn(2+) is required as a cofactor.

The protein localises to the cytoplasm. It catalyses the reaction N(6)-carboxybiotinyl-L-lysyl-[protein] + acetyl-CoA = N(6)-biotinyl-L-lysyl-[protein] + malonyl-CoA. Its pathway is lipid metabolism; malonyl-CoA biosynthesis; malonyl-CoA from acetyl-CoA: step 1/1. In terms of biological role, component of the acetyl coenzyme A carboxylase (ACC) complex. Biotin carboxylase (BC) catalyzes the carboxylation of biotin on its carrier protein (BCCP) and then the CO(2) group is transferred by the transcarboxylase to acetyl-CoA to form malonyl-CoA. The sequence is that of Acetyl-coenzyme A carboxylase carboxyl transferase subunit beta from Methylacidiphilum infernorum (isolate V4) (Methylokorus infernorum (strain V4)).